Reading from the N-terminus, the 119-residue chain is Aspartate 1-decarboxylase (119 aa).

Serine 25 functions as the Schiff-base intermediate with substrate; via pyruvic acid in the catalytic mechanism. Serine 25 bears the Pyruvic acid (Ser) mark. Residue threonine 57 participates in substrate binding. The active-site Proton donor is the tyrosine 58. 73–75 (GAA) contributes to the substrate binding site.

It belongs to the PanD family. In terms of assembly, heterooctamer of four alpha and four beta subunits. It depends on pyruvate as a cofactor. Post-translationally, is synthesized initially as an inactive proenzyme, which is activated by self-cleavage at a specific serine bond to produce a beta-subunit with a hydroxyl group at its C-terminus and an alpha-subunit with a pyruvoyl group at its N-terminus.

It is found in the cytoplasm. It catalyses the reaction L-aspartate + H(+) = beta-alanine + CO2. It participates in cofactor biosynthesis; (R)-pantothenate biosynthesis; beta-alanine from L-aspartate: step 1/1. Its function is as follows. Catalyzes the pyruvoyl-dependent decarboxylation of aspartate to produce beta-alanine. This Desulfotalea psychrophila (strain LSv54 / DSM 12343) protein is Aspartate 1-decarboxylase.